The following is a 73-amino-acid chain: Guanine nucleotide-binding protein G(I)/G(S)/G(O) subunit gamma-11 (73 aa).

Positions 54–73 (VKGIPEDKNPFKEKGSCIIS) are disordered. Cys70 carries the cysteine methyl ester modification. Cys70 is lipidated: S-farnesyl cysteine. The propeptide at 71-73 (IIS) is removed in mature form.

It belongs to the G protein gamma family. In terms of assembly, g proteins are composed of 3 units, alpha, beta and gamma. Interacts with beta-1 and beta-3, but not with beta-2.

The protein localises to the cell membrane. Functionally, guanine nucleotide-binding proteins (G proteins) are involved as a modulator or transducer in various transmembrane signaling systems. The beta and gamma chains are required for the GTPase activity, for replacement of GDP by GTP, and for G protein-effector interaction. The polypeptide is Guanine nucleotide-binding protein G(I)/G(S)/G(O) subunit gamma-11 (GNG11) (Bos taurus (Bovine)).